The primary structure comprises 249 residues: Coproheme decarboxylase (249 aa).

Tyrosine 145 is an active-site residue. Residues 145 to 149 and histidine 172 each bind Fe-coproporphyrin III; that span reads YPMAR.

This sequence belongs to the ChdC family. Type 1 subfamily. The cofactor is Fe-coproporphyrin III.

The enzyme catalyses Fe-coproporphyrin III + 2 H2O2 + 2 H(+) = heme b + 2 CO2 + 4 H2O. It carries out the reaction Fe-coproporphyrin III + H2O2 + H(+) = harderoheme III + CO2 + 2 H2O. It catalyses the reaction harderoheme III + H2O2 + H(+) = heme b + CO2 + 2 H2O. It participates in porphyrin-containing compound metabolism; protoheme biosynthesis. Its function is as follows. Involved in coproporphyrin-dependent heme b biosynthesis. Catalyzes the decarboxylation of Fe-coproporphyrin III (coproheme) to heme b (protoheme IX), the last step of the pathway. The reaction occurs in a stepwise manner with a three-propionate intermediate. This is Coproheme decarboxylase from Oceanobacillus iheyensis (strain DSM 14371 / CIP 107618 / JCM 11309 / KCTC 3954 / HTE831).